We begin with the raw amino-acid sequence, 340 residues long: DnaJ homolog subfamily B member 1 (340 aa).

The J domain maps to 2-70 (GKDYYQTLGL…REIFDRYGEE (69 aa)). Thr307 is subject to Phosphothreonine.

As to quaternary structure, interacts with DNAJC3. Interacts with HSF1 (via transactivation domain); this interaction results in the inhibition of heat shock- and HSF1-induced transcriptional activity during the attenuation and recovery phase period of the heat shock response. Interacts with BAG3.

The protein resides in the cytoplasm. Its subcellular location is the nucleus. It is found in the nucleolus. Functionally, interacts with HSP70 and can stimulate its ATPase activity. Stimulates the association between HSC70 and HIP. Negatively regulates heat shock-induced HSF1 transcriptional activity during the attenuation and recovery phase period of the heat shock response. Stimulates ATP hydrolysis and the folding of unfolded proteins mediated by HSPA1A/B (in vitro). In Mus musculus (Mouse), this protein is DnaJ homolog subfamily B member 1 (Dnajb1).